Here is a 488-residue protein sequence, read N- to C-terminus: MPEDVQNRTRIKSERYESGVIPYAKMGYWDADYKLKDTDILALFRITPQPGVDPVEAAAAVAGESSTATWTVVWTDLLTACDIYRAKAYRVDPVPGTSDQFFAYIAYECDLFEEGSLANLTASIIGNVFGFKAVKALRLEDMRIPYAYLKTFQGPATGVVVERERLDKFGRPFLGATVKPKLGLSGKNYGRVVYEGLTGGLDFLKDDENINSQPFMRWKERFLYCMEGVNRAAAATGEVKGSYLNITAATVEQMYERAEYAHAIGSVIVMIDLVIGYTAIQSMAIWARKAEVILHLHRAGNSTYARQKNHGINFRVICKWMRMCGVDHIHAGTVVGKLEGDPLMVKGFYNSLLLTHLKINLAEGLFFDMDWASLRKCVPVASGGIHCGQMHQLLYYLGDDVVLQFGGGTIGHPDGIQSGATANRVALESMVLARNEGRDYVGEGPDILRRAASTCGPLKAALDLWKDITFDYTSTDTPDFVEVATGSR.

Substrate contacts are provided by Asn-127 and Thr-177. Residue Lys-179 is the Proton acceptor of the active site. Position 181 (Lys-181) interacts with substrate. Mg(2+) is bound by residues Lys-205, Asp-207, and Glu-208. Lys-205 is modified (N6-carboxylysine). His-297 functions as the Proton acceptor in the catalytic mechanism. 3 residues coordinate substrate: Arg-298, His-330, and Ser-382.

Belongs to the RuBisCO large chain family. Type I subfamily. Heterohexadecamer of 8 large chains and 8 small chains. The cofactor is Mg(2+).

Its subcellular location is the plastid. It localises to the chloroplast. The enzyme catalyses 2 (2R)-3-phosphoglycerate + 2 H(+) = D-ribulose 1,5-bisphosphate + CO2 + H2O. The catalysed reaction is D-ribulose 1,5-bisphosphate + O2 = 2-phosphoglycolate + (2R)-3-phosphoglycerate + 2 H(+). Its function is as follows. RuBisCO catalyzes two reactions: the carboxylation of D-ribulose 1,5-bisphosphate, the primary event in carbon dioxide fixation, as well as the oxidative fragmentation of the pentose substrate in the photorespiration process. Both reactions occur simultaneously and in competition at the same active site. The polypeptide is Ribulose bisphosphate carboxylase large chain (Ectocarpus siliculosus (Brown alga)).